Reading from the N-terminus, the 278-residue chain is 2-dehydro-3-deoxyphosphooctonate aldolase (278 aa).

It belongs to the KdsA family.

The protein localises to the cytoplasm. The enzyme catalyses D-arabinose 5-phosphate + phosphoenolpyruvate + H2O = 3-deoxy-alpha-D-manno-2-octulosonate-8-phosphate + phosphate. The protein operates within carbohydrate biosynthesis; 3-deoxy-D-manno-octulosonate biosynthesis; 3-deoxy-D-manno-octulosonate from D-ribulose 5-phosphate: step 2/3. It functions in the pathway bacterial outer membrane biogenesis; lipopolysaccharide biosynthesis. This chain is 2-dehydro-3-deoxyphosphooctonate aldolase, found in Fusobacterium nucleatum subsp. nucleatum (strain ATCC 25586 / DSM 15643 / BCRC 10681 / CIP 101130 / JCM 8532 / KCTC 2640 / LMG 13131 / VPI 4355).